A 128-amino-acid polypeptide reads, in one-letter code: Fluoride-specific ion channel FluC (128 aa).

4 helical membrane-spanning segments follow: residues 4–24 (LLLALIVGLGGFLGASLRYLI), 39–59 (GTLIANILGALLIGFIMEFSM), 71–91 (FLTTGIMGGLTTFSTFSYETI), and 99–119 (MTLGIENIILNLGCSLLFVVI). Na(+)-binding residues include Gly78 and Thr81.

Belongs to the fluoride channel Fluc/FEX (TC 1.A.43) family.

It is found in the cell membrane. It carries out the reaction fluoride(in) = fluoride(out). Its activity is regulated as follows. Na(+) is not transported, but it plays an essential structural role and its presence is essential for fluoride channel function. In terms of biological role, fluoride-specific ion channel. Important for reducing fluoride concentration in the cell, thus reducing its toxicity. In Clostridium perfringens (strain 13 / Type A), this protein is Fluoride-specific ion channel FluC.